A 1066-amino-acid polypeptide reads, in one-letter code: Bifunctional cytochrome P450/NADPH--P450 reductase (1066 aa).

The tract at residues 1-480 is cytochrome P450; that stretch reads MAESVPIPEP…LAGNGATSSS (480 aa). Cys-407 serves as a coordination point for heme. An NADPH-P-450 reductase region spans residues 481 to 1066; sequence THNIKAAANL…NERFATDVFD (586 aa). Residues 500–641 enclose the Flavodoxin-like domain; that stretch reads MAIFYGSNSG…DFEAWEDIVL (142 aa). FMN-binding positions include 506 to 511, 554 to 557, Cys-588, and Thr-596; these read SNSGTC and SYEG. The 229-residue stretch at 676–904 folds into the FAD-binding FR-type domain; the sequence is QDVEEALVVA…RASSEAFHLP (229 aa).

It in the N-terminal section; belongs to the cytochrome P450 family. The cofactor is FAD. FMN is required as a cofactor. It depends on heme as a cofactor.

Its subcellular location is the membrane. The catalysed reaction is an organic molecule + reduced [NADPH--hemoprotein reductase] + O2 = an alcohol + oxidized [NADPH--hemoprotein reductase] + H2O + H(+). It carries out the reaction 2 oxidized [cytochrome P450] + NADPH = 2 reduced [cytochrome P450] + NADP(+) + H(+). Its activity is regulated as follows. Stimulated NADPH--cytochrome reductase activity in the presence of substrate. Inhibited by fatty acid substrates longer than 13 carbons and the degree of inhibition increases with increasing chain length. Its function is as follows. Functions as a fatty acid monooxygenase. Catalyzes hydroxylation of fatty acids at omega-1, omega-2 and omega-3 positions. Shows activity toward fatty acids with a chain length of 9-18 carbons with optimum chain lengths of 12-14 carbons (lauric, tridecylic and myristic acids). Can also use shorter saturated fatty acids with a chain length of 9 or 10 carbons as substrates. Also displays a NADPH-dependent reductase activity in the C-terminal domain, which allows electron transfer from NADPH to the heme iron of the cytochrome P450 N-terminal domain. The protein is Bifunctional cytochrome P450/NADPH--P450 reductase of Fusarium oxysporum (Fusarium vascular wilt).